A 128-amino-acid polypeptide reads, in one-letter code: Cystatin-12 (128 aa).

The signal sequence occupies residues 1–21 (MLWKSVLSVALIVLGIHDCSF). 2 disulfides stabilise this stretch: Cys82/Cys92 and Cys105/Cys125. Asn122 is a glycosylation site (N-linked (GlcNAc...) asparagine).

It belongs to the cystatin family. Located at the very proximal caput epididymis (at protein level). Expressed in epididymis, Sertoli cells and testis. Also found to be weakly expressed in ovary and prostate.

The protein localises to the secreted. May play a specialized role in spermatogenesis. This is Cystatin-12 (Cst12) from Mus musculus (Mouse).